The following is a 984-amino-acid chain: Lateral signaling target protein 2 homolog (984 aa).

Disordered stretches follow at residues 308-462, 508-527, 539-642, and 749-900; these read PLGS…DTDE, YGTT…PSTS, RLRL…SSLS, and DNVF…SPPA. Composition is skewed to low complexity over residues 326–356, 369–380, 387–404, and 412–433; these read TTSS…TTST, NNHNSNSNSSTN, TLRS…TPTA, and PSHS…PADW. The segment covering 434–462 has biased composition (acidic residues); sequence SDGDDEDEDDDDIEVDEEDLESSDDDTDE. Residues S544 and S545 each carry the phosphoserine modification. Residues 571–611 show a composition bias toward basic residues; sequence RESHSHRHHQRHHHHHHHRHSHQHQHRQPHPHRTTRSGRKR. Over residues 630–642 the composition is skewed to low complexity; that stretch reads LASGDTSAASSLS. Composition is skewed to polar residues over residues 760-779 and 789-806; these read ATGQ…TIDL and SGAT…SRSL. S805 carries the phosphoserine modification. 2 stretches are compositionally biased toward low complexity: residues 811-869 and 886-899; these read AASS…PVSA and PSSA…LSPP. The FYVE-type zinc-finger motif lies at 904–964; sequence DGKAPRCMAC…VCRDCYVREV (61 aa). C910, C913, C926, C929, C934, C937, C956, and C959 together coordinate Zn(2+).

This sequence belongs to the lst-2 family.

Negative regulator of epidermal growth factor receptor (EGFR) signaling. In Drosophila yakuba (Fruit fly), this protein is Lateral signaling target protein 2 homolog.